The sequence spans 262 residues: Acetaldehyde dehydrogenase 7 (262 aa).

Serine 10–isoleucine 13 serves as a coordination point for NAD(+). Catalysis depends on cysteine 128, which acts as the Acyl-thioester intermediate. Serine 159–asparagine 167 is an NAD(+) binding site.

It belongs to the acetaldehyde dehydrogenase family.

The catalysed reaction is acetaldehyde + NAD(+) + CoA = acetyl-CoA + NADH + H(+). The protein is Acetaldehyde dehydrogenase 7 of Rhodococcus jostii (strain RHA1).